The primary structure comprises 493 residues: Cobyric acid synthase (493 aa).

The 192-residue stretch at D252–W443 folds into the GATase cobBQ-type domain. Residue C333 is the Nucleophile of the active site. The active site involves H435.

It belongs to the CobB/CobQ family. CobQ subfamily.

Its pathway is cofactor biosynthesis; adenosylcobalamin biosynthesis. Functionally, catalyzes amidations at positions B, D, E, and G on adenosylcobyrinic A,C-diamide. NH(2) groups are provided by glutamine, and one molecule of ATP is hydrogenolyzed for each amidation. This Nostoc sp. (strain PCC 7120 / SAG 25.82 / UTEX 2576) protein is Cobyric acid synthase.